We begin with the raw amino-acid sequence, 324 residues long: o-succinylbenzoate synthase (324 aa).

Catalysis depends on Lys-135, which acts as the Proton donor. Mg(2+)-binding residues include Asp-163, Glu-192, and Asp-215. Residue Lys-237 is the Proton acceptor of the active site.

Belongs to the mandelate racemase/muconate lactonizing enzyme family. MenC type 1 subfamily. The cofactor is a divalent metal cation.

The enzyme catalyses (1R,6R)-6-hydroxy-2-succinyl-cyclohexa-2,4-diene-1-carboxylate = 2-succinylbenzoate + H2O. The protein operates within quinol/quinone metabolism; 1,4-dihydroxy-2-naphthoate biosynthesis; 1,4-dihydroxy-2-naphthoate from chorismate: step 4/7. It participates in quinol/quinone metabolism; menaquinone biosynthesis. Converts 2-succinyl-6-hydroxy-2,4-cyclohexadiene-1-carboxylate (SHCHC) to 2-succinylbenzoate (OSB). The protein is o-succinylbenzoate synthase of Aliivibrio fischeri (strain ATCC 700601 / ES114) (Vibrio fischeri).